The primary structure comprises 122 residues: uncharacterized protein (122 aa).

A signal peptide spans 1 to 18; the sequence is MYSMAFLASSGLVANSSA. Residue asparagine 15 is glycosylated (N-linked (GlcNAc...) asparagine).

This is an uncharacterized protein from Saccharomyces cerevisiae (strain ATCC 204508 / S288c) (Baker's yeast).